The following is an 883-amino-acid chain: Phosphoenolpyruvate carboxylase (883 aa).

Active-site residues include histidine 138 and lysine 546.

This sequence belongs to the PEPCase type 1 family. The cofactor is Mg(2+).

It carries out the reaction oxaloacetate + phosphate = phosphoenolpyruvate + hydrogencarbonate. Forms oxaloacetate, a four-carbon dicarboxylic acid source for the tricarboxylic acid cycle. The protein is Phosphoenolpyruvate carboxylase of Salmonella paratyphi A (strain ATCC 9150 / SARB42).